We begin with the raw amino-acid sequence, 322 residues long: uncharacterized protein (322 aa).

Composition is skewed to basic residues over residues 1 to 16 and 43 to 61; these read MPGNSRRRGAVRKSGT and LRPHHPAAKRARAQPRRPV. The segment at 1–69 is disordered; that stretch reads MPGNSRRRGA…PVKRADETET (69 aa). Residues G261, I281, and L290 each contribute to the S-adenosyl-L-methionine site.

The protein belongs to the class IV-like SAM-binding methyltransferase superfamily. RNA methyltransferase TrmH family.

This is an uncharacterized protein from Mycobacterium bovis (strain BCG / Pasteur 1173P2).